The chain runs to 481 residues: UDP-N-acetylmuramoyl-L-alanyl-D-glutamate--L-lysine ligase (481 aa).

Ser42 is a binding site for UDP-N-acetyl-alpha-D-muramoyl-L-alanyl-D-glutamate. Residue 118-124 (GTKGKTT) coordinates ATP. UDP-N-acetyl-alpha-D-muramoyl-L-alanyl-D-glutamate is bound by residues Gln158, 160 to 161 (TT), Ser187, and Arg195. Lys229 bears the N6-carboxylysine mark. The L-lysine recognition motif motif lies at 404–407 (DDPN).

It belongs to the MurCDEF family. MurE subfamily. In terms of processing, carboxylation is probably crucial for Mg(2+) binding and, consequently, for the gamma-phosphate positioning of ATP.

It localises to the cytoplasm. It catalyses the reaction UDP-N-acetyl-alpha-D-muramoyl-L-alanyl-D-glutamate + L-lysine + ATP = UDP-N-acetyl-alpha-D-muramoyl-L-alanyl-gamma-D-glutamyl-L-lysine + ADP + phosphate + H(+). Its pathway is cell wall biogenesis; peptidoglycan biosynthesis. Functionally, catalyzes the addition of L-lysine to the nucleotide precursor UDP-N-acetylmuramoyl-L-alanyl-D-glutamate (UMAG) in the biosynthesis of bacterial cell-wall peptidoglycan. In Streptococcus pyogenes serotype M28 (strain MGAS6180), this protein is UDP-N-acetylmuramoyl-L-alanyl-D-glutamate--L-lysine ligase.